A 429-amino-acid polypeptide reads, in one-letter code: Adenylosuccinate synthetase (429 aa).

GTP contacts are provided by residues 12–18 (GDEGKGK) and 40–42 (GHT). D13 (proton acceptor) is an active-site residue. Mg(2+) contacts are provided by D13 and G40. Residues 13-16 (DEGK), 38-41 (NAGH), T128, R142, Q223, T238, and R302 each bind IMP. The active-site Proton donor is H41. Residue 298–304 (VNTGRKR) coordinates substrate. GTP contacts are provided by residues R304, 330-332 (KLD), and 412-414 (GVG).

Belongs to the adenylosuccinate synthetase family. Homodimer. Mg(2+) serves as cofactor.

It localises to the cytoplasm. The enzyme catalyses IMP + L-aspartate + GTP = N(6)-(1,2-dicarboxyethyl)-AMP + GDP + phosphate + 2 H(+). Its pathway is purine metabolism; AMP biosynthesis via de novo pathway; AMP from IMP: step 1/2. In terms of biological role, plays an important role in the de novo pathway of purine nucleotide biosynthesis. Catalyzes the first committed step in the biosynthesis of AMP from IMP. This chain is Adenylosuccinate synthetase, found in Corynebacterium efficiens (strain DSM 44549 / YS-314 / AJ 12310 / JCM 11189 / NBRC 100395).